Consider the following 316-residue polypeptide: Olfactory receptor 1165 (316 aa).

Residues 1 to 28 (MMLDLGNESSVTMFILSGFSEYPHLHAP) are Extracellular-facing. A glycan (N-linked (GlcNAc...) asparagine) is linked at N7. The chain crosses the membrane as a helical span at residues 29 to 50 (LFLLFFMIYTVTLIGNLGIIVV). Over 51 to 61 (RKVNPKLHTPM) the chain is Cytoplasmic. The helical transmembrane segment at 62 to 80 (YFFLSHLSFLDICYSSVFT) threads the bilayer. Residues 81 to 99 (PKLLEILIVEDRTISFKGC) are Extracellular-facing. Cysteines 99 and 181 form a disulfide. A helical transmembrane segment spans residues 100–122 (MTQFFLICAFVITEMFMLAVMAY). Topologically, residues 123-141 (DRFVAVCNPLLYTVSMSPK) are cytoplasmic. A helical transmembrane segment spans residues 142–166 (LCAFLVAGTYMWGVLCSLTITYSLL). Topologically, residues 167-205 (QLSYCGPNIINHFGCEYSAILSLSCSDPTFSQVVCLTIS) are extracellular. A helical membrane pass occupies residues 206-228 (IFNETCSLLIILASYVFIVVTII). Over 229 to 239 (KMPSKGGLQKA) the chain is Cytoplasmic. A helical membrane pass occupies residues 240–263 (FSTCSSHLTAISIFHGIILLLYCV). The Extracellular portion of the chain corresponds to 264-268 (PNSKN). Residues 269-291 (SWLVVKVATVLFTVMIPMLNPLI) traverse the membrane as a helical segment. The Cytoplasmic portion of the chain corresponds to 292-316 (YSLRNKDVKGTVSRLMHLKLQAHST).

The protein belongs to the G-protein coupled receptor 1 family.

It is found in the cell membrane. Functionally, olfactory receptor. This is Olfactory receptor 1165 from Mus musculus (Mouse).